Consider the following 467-residue polypeptide: Repressible acid phosphatase (467 aa).

Residues 1 to 17 (MFKSVVYSILAASLANA) form the signal peptide. His75 serves as the catalytic Nucleophile. Asn97, Asn103, Asn162, Asn192, Asn250, and Asn315 each carry an N-linked (GlcNAc...) asparagine glycan. Residue Asp338 is the Proton donor of the active site. Asn356, Asn390, Asn439, Asn445, Asn456, and Asn461 each carry an N-linked (GlcNAc...) asparagine glycan.

The protein belongs to the histidine acid phosphatase family. Post-translationally, glycosylated during secretion across the membrane.

Its subcellular location is the secreted. The catalysed reaction is a phosphate monoester + H2O = an alcohol + phosphate. Partially mediates extracellular nucleotide derived phosphate hydrolysis along with NPP1 and NPP2. In Saccharomyces cerevisiae (strain ATCC 204508 / S288c) (Baker's yeast), this protein is Repressible acid phosphatase (PHO5).